Here is a 398-residue protein sequence, read N- to C-terminus: Probable aminomethyltransferase (398 aa).

The protein belongs to the GcvT family. The glycine cleavage system is composed of four proteins: P, T, L and H.

The enzyme catalyses N(6)-[(R)-S(8)-aminomethyldihydrolipoyl]-L-lysyl-[protein] + (6S)-5,6,7,8-tetrahydrofolate = N(6)-[(R)-dihydrolipoyl]-L-lysyl-[protein] + (6R)-5,10-methylene-5,6,7,8-tetrahydrofolate + NH4(+). In terms of biological role, the glycine cleavage system catalyzes the degradation of glycine. The sequence is that of Probable aminomethyltransferase from Thermococcus gammatolerans (strain DSM 15229 / JCM 11827 / EJ3).